The primary structure comprises 580 residues: Malto-oligosyltrehalose trehalohydrolase (580 aa).

Positions 56-88 (LPDPRSARQPDGVHARSQRWEPPGQFGAARTDT) are disordered. Residues 60-69 (RSARQPDGVH) show a composition bias toward basic and acidic residues. 245–250 (RLDAVH) serves as a coordination point for substrate. The Nucleophile role is filled by Asp-247. Glu-284 functions as the Proton donor in the catalytic mechanism. Substrate-binding positions include 309–313 (DDIHH) and 379–384 (HDQVGN).

It belongs to the glycosyl hydrolase 13 family.

It is found in the cytoplasm. The enzyme catalyses hydrolysis of (1-&gt;4)-alpha-D-glucosidic linkage in 4-alpha-D-[(1-&gt;4)-alpha-D-glucanosyl]n trehalose to yield trehalose and (1-&gt;4)-alpha-D-glucan.. Its pathway is glycan biosynthesis; trehalose biosynthesis. Is involved in the biosynthesis of trehalose but not in that of capsular glucan and glycogen. The polypeptide is Malto-oligosyltrehalose trehalohydrolase (treZ) (Mycobacterium tuberculosis (strain CDC 1551 / Oshkosh)).